A 182-amino-acid chain; its full sequence is Alpha-S2-casein (182 aa).

The first 15 residues, 1–15 (MKFFIFTCLLAVALA), serve as a signal peptide directing secretion. Phosphoserine is present on residues Ser22, Ser23, and Ser24.

It belongs to the alpha-casein family. Mammary gland specific. Secreted in milk.

It localises to the secreted. Its function is as follows. Important role in the capacity of milk to transport calcium phosphate. The protein is Alpha-S2-casein (CSN1S2) of Oryctolagus cuniculus (Rabbit).